Consider the following 466-residue polypeptide: Glutamate--tRNA ligase (466 aa).

The 'HIGH' region signature appears at 11–21; it reads PSPTGFIHLGN. Positions 243-247 match the 'KMSKS' region motif; it reads KMSKR. Lys-246 lines the ATP pocket.

It belongs to the class-I aminoacyl-tRNA synthetase family. Glutamate--tRNA ligase type 1 subfamily. As to quaternary structure, monomer.

Its subcellular location is the cytoplasm. It carries out the reaction tRNA(Glu) + L-glutamate + ATP = L-glutamyl-tRNA(Glu) + AMP + diphosphate. Its function is as follows. Catalyzes the attachment of glutamate to tRNA(Glu) in a two-step reaction: glutamate is first activated by ATP to form Glu-AMP and then transferred to the acceptor end of tRNA(Glu). This chain is Glutamate--tRNA ligase, found in Cupriavidus necator (strain ATCC 17699 / DSM 428 / KCTC 22496 / NCIMB 10442 / H16 / Stanier 337) (Ralstonia eutropha).